The sequence spans 296 residues: MAVSLACQAPRTPMAIPPSYADLGKSARDIFNKGYGFGLVKLDVKTKSASGVEFTTSGSSNTDTGKVNGSLETKYKWAEYGLTFTEKWNTDNTLGTEIAIEDQIAKGLKLTFDTTFSPNTGKKSGKIKSAYKRECLNLGCDVDFDFAGPAIHGSAVFGYEGWLAGYQMTFDSAKSKLTRNNFSVGYKTGDFQLHTNVNDGSEFGGSIYQKVSDNLETAVNLAWTAGSNSTRFGIAAKYKLDSTASISAKVNNSSLVGVGYTQTLRPGVKLTLSALIDGKSINAGGHKLGLGLELEA.

Lys25 is a binding site for ATP. Lys25 participates in a covalent cross-link: Glycyl lysine isopeptide (Lys-Gly) (interchain with G-Cter in ubiquitin). At Ser26 the chain carries Phosphoserine. Lys33 contributes to the ATP binding site. At Lys33 the chain carries N6-acetyllysine; alternate. Residue Lys33 is modified to N6-succinyllysine; alternate. Lys33 is covalently cross-linked (Glycyl lysine isopeptide (Lys-Gly) (interchain with G-Cter in ubiquitin); alternate). Beta stranded transmembrane passes span 39 to 48 (LVKLDVKTKS) and 52 to 60 (VEFTTSGSS). Glycyl lysine isopeptide (Lys-Gly) (interchain with G-Cter in ubiquitin) cross-links involve residues Lys66 and Lys74. Residues 67–77 (VNGSLETKYKW) traverse the membrane as a beta stranded segment. Phosphotyrosine is present on Tyr80. 3 beta stranded membrane passes run 82 to 89 (LTFTEKWN), 93 to 102 (TLGTEIAIED), and 108 to 117 (LKLTFDTTFS). Thr120 carries the phosphothreonine modification. An N6-acetyllysine; alternate modification is found at Lys122. Lys122 participates in a covalent cross-link: Glycyl lysine isopeptide (Lys-Gly) (interchain with G-Cter in ubiquitin); alternate. A Glycyl lysine isopeptide (Lys-Gly) (interchain with G-Cter in ubiquitin) cross-link involves residue Lys123. 4 beta stranded membrane-spanning segments follow: residues 124-133 (SGKIKSAYKR), 136-143 (LNLGCDVD), 150-158 (AIHGSAVFG), and 163-171 (LAGYQMTFD). A Glycyl lysine isopeptide (Lys-Gly) (interchain with G-Cter in ubiquitin) cross-link involves residue Lys174. Transmembrane regions (beta stranded) follow at residues 176–188 (KLTRNNFSVGYKT), 191–198 (FQLHTNVN), 202–211 (EFGGSIYQKV), 215–224 (LETAVNLAWT), 231–240 (RFGIAAKYKL), and 244–251 (ASISAKVN). Ser206 bears the Phosphoserine mark. Position 253 is a phosphoserine (Ser253). Residues 255-257 (LVG) and 273-277 (SALID) contribute to the NAD(+) site. 2 beta stranded membrane passes run 255–264 (LVGVGYTQTL) and 267–276 (GVKLTLSALI). Lys279 bears the N6-acetyllysine; alternate mark. Residue Lys279 forms a Glycyl lysine isopeptide (Lys-Gly) (interchain with G-Cter in ubiquitin); alternate linkage. Residues 286-295 (HKLGLGLELE) form a beta stranded membrane-spanning segment. Residue Lys287 forms a Glycyl lysine isopeptide (Lys-Gly) (interchain with G-Cter in ubiquitin) linkage.

It belongs to the eukaryotic mitochondrial porin family. In terms of assembly, monomer, homodimer and higher order oligomers; formation of higher order structures is necessary for scramblase activity. In terms of processing, ubiquitinated by PRKN during mitophagy, leading to its degradation and enhancement of mitophagy. Deubiquitinated by USP30.

It is found in the mitochondrion outer membrane. It localises to the membrane. It catalyses the reaction chloride(in) = chloride(out). It carries out the reaction K(+)(in) = K(+)(out). The enzyme catalyses a 1,2-diacyl-sn-glycero-3-phospho-L-serine(in) = a 1,2-diacyl-sn-glycero-3-phospho-L-serine(out). The catalysed reaction is a 1,2-diacyl-sn-glycero-3-phosphocholine(in) = a 1,2-diacyl-sn-glycero-3-phosphocholine(out). It catalyses the reaction a 1,2-diacyl-sn-glycero-3-phospho-(1D-myo-inositol)(in) = a 1,2-diacyl-sn-glycero-3-phospho-(1D-myo-inositol)(out). In terms of biological role, non-selective voltage-gated ion channel that mediates the transport of anions and cations through the mitochondrion outer membrane and plasma membrane. The channel adopts an open conformation at zero mV and a closed conformation at both positive and negative potentials. There are two populations of channels; the main that functions in a lower open-state conductance with lower ion selectivity, that switch, in a voltage-dependent manner, from the open to a low-conducting 'closed' state and the other that has a normal ion selectivity in the typical high conductance, 'open' state. Binds various lipids, including the sphingolipid ceramide, the phospholipid phosphatidylcholine, and the sterols cholesterol and oxysterol. Binding of ceramide promotes the mitochondrial outer membrane permeabilization (MOMP) apoptotic pathway. Catalyzes the scrambling of phospholipids across the outer mitochondrial membrane; the mechanism is unrelated to channel activity and is capable of translocating both anionic and zwitterionic phospholipids. This chain is Non-selective voltage-gated ion channel VDAC2, found in Meleagris gallopavo (Wild turkey).